We begin with the raw amino-acid sequence, 113 residues long: Dolichyl-diphosphooligosaccharide--protein glycosyltransferase subunit dad-1 (113 aa).

Topologically, residues 1–32 (MAAQVVPVLSKLFDDYQKTTSSKLKIIDAYMT) are cytoplasmic. A helical transmembrane segment spans residues 33-53 (YILFTGIFQFIYCLLVGTFPF). Topologically, residues 54–55 (NS) are lumenal. Residues 56–78 (FLSGFISTVTSFVLASCLRMQVN) form a helical membrane-spanning segment. The Cytoplasmic portion of the chain corresponds to 79–92 (QENRSEFTAVSTER). A helical transmembrane segment spans residues 93–113 (AFADFIFANLILHLVVVNFLG).

The protein belongs to the DAD/OST2 family. In terms of assembly, component of the oligosaccharyltransferase (OST) complex.

It is found in the endoplasmic reticulum membrane. The protein operates within protein modification; protein glycosylation. In terms of biological role, subunit of the oligosaccharyl transferase (OST) complex that catalyzes the initial transfer of a defined glycan (Glc(3)Man(9)GlcNAc(2) in eukaryotes) from the lipid carrier dolichol-pyrophosphate to an asparagine residue within an Asn-X-Ser/Thr consensus motif in nascent polypeptide chains, the first step in protein N-glycosylation. N-glycosylation occurs cotranslationally and the complex associates with the Sec61 complex at the channel-forming translocon complex that mediates protein translocation across the endoplasmic reticulum (ER). All subunits are required for a maximal enzyme activity. Possesses cell death-inhibiting activity. Suppresses some programmed cell death in C.elegans. The sequence is that of Dolichyl-diphosphooligosaccharide--protein glycosyltransferase subunit dad-1 from Caenorhabditis elegans.